Reading from the N-terminus, the 296-residue chain is MSDENIRQIAFYGKGGIGKSTTSQNTIAALAEMGERIMIVGCDPKADSTRLMLHSKAQTTILHLAAERGAVEDLELEEVLLTGYRDVKCVESGGPEPGVGCAGRGIITAINFLEENGAYEDLDFVSYDVLGDVVCGGFAMPIREGKAQEIYIVTSGEMMAMYAANNIARGILKYAHSGGVRLGGLICNSRKVDREIELIETLAQRLNTQMIHFVPRDNIVQHAELRRMTVNEYAPDSAQAQEYATLARKIKDNTNLTIPTPISMDELEDLLVEFGLLGGDEEYEKAIKQDLAKRGA.

Gly13–Ser20 is a binding site for ATP. Cys101 contacts [4Fe-4S] cluster. An ADP-ribosylarginine; by dinitrogenase reductase ADP-ribosyltransferase modification is found at Arg104. Cys135 serves as a coordination point for [4Fe-4S] cluster.

It belongs to the NifH/BchL/ChlL family. In terms of assembly, homodimer. It depends on [4Fe-4S] cluster as a cofactor. Post-translationally, the reversible ADP-ribosylation of Arg-104 inactivates the nitrogenase reductase and regulates nitrogenase activity.

It carries out the reaction N2 + 8 reduced [2Fe-2S]-[ferredoxin] + 16 ATP + 16 H2O = H2 + 8 oxidized [2Fe-2S]-[ferredoxin] + 2 NH4(+) + 16 ADP + 16 phosphate + 6 H(+). Functionally, the key enzymatic reactions in nitrogen fixation are catalyzed by the nitrogenase complex, which has 2 components: the iron protein and the molybdenum-iron protein. The protein is Nitrogenase iron protein (nifH) of Leptolyngbya boryana (Plectonema boryanum).